The following is a 240-amino-acid chain: Proteasome subunit alpha (240 aa).

It belongs to the peptidase T1A family. In terms of assembly, the 20S proteasome core is composed of 14 alpha and 14 beta subunits that assemble into four stacked heptameric rings, resulting in a barrel-shaped structure. The two inner rings, each composed of seven catalytic beta subunits, are sandwiched by two outer rings, each composed of seven alpha subunits. The catalytic chamber with the active sites is on the inside of the barrel. Has a gated structure, the ends of the cylinder being occluded by the N-termini of the alpha-subunits. Is capped at one or both ends by the proteasome regulatory ATPase, PAN.

The protein localises to the cytoplasm. With respect to regulation, the formation of the proteasomal ATPase PAN-20S proteasome complex, via the docking of the C-termini of PAN into the intersubunit pockets in the alpha-rings, triggers opening of the gate for substrate entry. Interconversion between the open-gate and close-gate conformations leads to a dynamic regulation of the 20S proteasome proteolysis activity. In terms of biological role, component of the proteasome core, a large protease complex with broad specificity involved in protein degradation. This chain is Proteasome subunit alpha, found in Methanoculleus marisnigri (strain ATCC 35101 / DSM 1498 / JR1).